Here is an 832-residue protein sequence, read N- to C-terminus: Dolichyl-phosphate-mannose--protein mannosyltransferase 6 (832 aa).

A disordered region spans residues methionine 1 to threonine 44. Asparagine 20 and asparagine 59 each carry an N-linked (GlcNAc...) asparagine glycan. The next 7 membrane-spanning stretches (helical) occupy residues phenylalanine 135–alanine 155, tyrosine 175–tyrosine 194, threonine 206–isoleucine 227, methionine 232–isoleucine 252, leucine 266–tryptophan 286, alanine 293–phenylalanine 311, and leucine 327–alanine 347. N-linked (GlcNAc...) asparagine glycosylation is present at asparagine 357. An MIR 1 domain is found at proline 383 to glycine 437. Asparagine 453 is a glycosylation site (N-linked (GlcNAc...) asparagine). MIR domains are found at residues histidine 466–glutamine 522 and proline 537–histidine 595. 4 helical membrane passes run isoleucine 676–isoleucine 696, leucine 723–isoleucine 743, valine 755–leucine 775, and isoleucine 787–phenylalanine 807.

It belongs to the glycosyltransferase 39 family.

It localises to the endoplasmic reticulum membrane. The enzyme catalyses a di-trans,poly-cis-dolichyl beta-D-mannosyl phosphate + L-seryl-[protein] = 3-O-(alpha-D-mannosyl)-L-seryl-[protein] + a di-trans,poly-cis-dolichyl phosphate + H(+). It carries out the reaction a di-trans,poly-cis-dolichyl beta-D-mannosyl phosphate + L-threonyl-[protein] = 3-O-(alpha-D-mannosyl)-L-threonyl-[protein] + a di-trans,poly-cis-dolichyl phosphate + H(+). Its pathway is protein modification; protein glycosylation. Functionally, protein mannosyltransferase (PMT) involved in hyphal morphogenesis and drug sensitivity. Transfers mannose from Dol-P-mannose to Ser or Thr residues on proteins. PMT1, PMT2 and PMT4 account for most of the protein-O-glycosylation activity, while PMT5 and PMT6 may specifically modulate a much narrower spectrum of target proteins. Required for biofilm formation and virulence. The protein is Dolichyl-phosphate-mannose--protein mannosyltransferase 6 (PMT6) of Candida albicans (strain SC5314 / ATCC MYA-2876) (Yeast).